A 159-amino-acid polypeptide reads, in one-letter code: Probable deoxyuridine 5'-triphosphate nucleotidohydrolase (159 aa).

This sequence belongs to the dCTP deaminase family. Archaeal dUTPase subfamily.

It carries out the reaction dUTP + H2O = dUMP + diphosphate + H(+). It participates in pyrimidine metabolism; dUMP biosynthesis; dUMP from dCTP (dUTP route): step 2/2. Its function is as follows. This enzyme is involved in nucleotide metabolism: it produces dUMP, the immediate precursor of thymidine nucleotides and it decreases the intracellular concentration of dUTP so that uracil cannot be incorporated into DNA. The sequence is that of Probable deoxyuridine 5'-triphosphate nucleotidohydrolase from Aeropyrum pernix (strain ATCC 700893 / DSM 11879 / JCM 9820 / NBRC 100138 / K1).